Reading from the N-terminus, the 102-residue chain is Ribosomal silencing factor RsfS (102 aa).

Belongs to the Iojap/RsfS family. As to quaternary structure, interacts with ribosomal protein uL14 (rplN).

Its subcellular location is the cytoplasm. Its function is as follows. Functions as a ribosomal silencing factor. Interacts with ribosomal protein uL14 (rplN), blocking formation of intersubunit bridge B8. Prevents association of the 30S and 50S ribosomal subunits and the formation of functional ribosomes, thus repressing translation. The protein is Ribosomal silencing factor RsfS of Haemophilus influenzae (strain ATCC 51907 / DSM 11121 / KW20 / Rd).